We begin with the raw amino-acid sequence, 20 residues long: 39 kDa major outer membrane protein (20 aa).

It is found in the cell outer membrane. The protein is 39 kDa major outer membrane protein of Aggregatibacter actinomycetemcomitans (Actinobacillus actinomycetemcomitans).